Consider the following 748-residue polypeptide: Cysteine--tRNA ligase, cytoplasmic (748 aa).

A disordered region spans residues 1-25 (MADSSGQQGKGRRVQPQWSPPAGTQ). Ala-2 carries the N-acetylalanine modification. Residue Ser-19 is modified to Phosphoserine. Cys-55 is a binding site for Zn(2+). Gly-56 contributes to the L-cysteine binding site. Residues 57–67 (PTVYDASHMGH) carry the 'HIGH' region motif. Arg-79 is modified (phosphoserine). Residue Thr-96 coordinates L-cysteine. The 'KIIK' region motif lies at 101 to 104 (KIIK). 2 positions are modified to phosphoserine: Ser-305 and Ser-307. Residues Cys-348, His-373, and Glu-377 each coordinate Zn(2+). His-373 provides a ligand contact to L-cysteine. The 'KMSKS' region signature appears at 406–410 (KMSKS). Lys-409 provides a ligand contact to ATP. Lys-503 is subject to N6-acetyllysine. Residues 653–679 (EKRRVEEEKRKKKEEAARRKQEQEAAK) show a composition bias toward basic and acidic residues. The interval 653 to 686 (EKRRVEEEKRKKKEEAARRKQEQEAAKLAKMKIP) is disordered. Ser-746 carries the post-translational modification Phosphoserine.

It belongs to the class-I aminoacyl-tRNA synthetase family. As to quaternary structure, homodimer. Zn(2+) is required as a cofactor.

It is found in the cytoplasm. The catalysed reaction is tRNA(Cys) + L-cysteine + ATP = L-cysteinyl-tRNA(Cys) + AMP + diphosphate. Its function is as follows. Catalyzes the ATP-dependent ligation of cysteine to tRNA(Cys). In Homo sapiens (Human), this protein is Cysteine--tRNA ligase, cytoplasmic.